A 92-amino-acid chain; its full sequence is Sugar fermentation stimulation protein B (92 aa).

The segment at residues 50-69 is a DNA-binding region (H-T-H motif); that stretch reads EMIIAKALGTDPWVIWPSRY.

The protein belongs to the ner transcriptional regulatory family.

Functionally, this protein is involved in positive regulation of the metabolism of sugars. The chain is Sugar fermentation stimulation protein B (sfsB) from Escherichia coli O157:H7.